The following is a 33-amino-acid chain: uncharacterized protein (33 aa).

The Cytoplasmic portion of the chain corresponds to 1 to 12 (MKENKVQQISHK). Residues 13–33 (LINIVVFVAIVEYAYLFLHFY) form a helical membrane-spanning segment.

It is found in the cell inner membrane. This is an uncharacterized protein from Escherichia coli (strain K12).